The primary structure comprises 367 residues: Chorismate synthase (367 aa).

NADP(+) contacts are provided by R48 and R54. Residues 125-127 (RSS), 238-239 (NA), G278, 293-297 (KPTSS), and R319 each bind FMN.

Belongs to the chorismate synthase family. Homotetramer. FMNH2 serves as cofactor.

It catalyses the reaction 5-O-(1-carboxyvinyl)-3-phosphoshikimate = chorismate + phosphate. It functions in the pathway metabolic intermediate biosynthesis; chorismate biosynthesis; chorismate from D-erythrose 4-phosphate and phosphoenolpyruvate: step 7/7. Catalyzes the anti-1,4-elimination of the C-3 phosphate and the C-6 proR hydrogen from 5-enolpyruvylshikimate-3-phosphate (EPSP) to yield chorismate, which is the branch point compound that serves as the starting substrate for the three terminal pathways of aromatic amino acid biosynthesis. This reaction introduces a second double bond into the aromatic ring system. The chain is Chorismate synthase from Xanthomonas campestris pv. campestris (strain 8004).